The following is a 173-amino-acid chain: MILTFARSLYTQGQYNGKIREYFYYVSHNGFLFLDDSRMKNFTAAYKDIQFLNFFYRKIKENKTGRYEDTFPWVSLCGIERNFLRCDDTPLVYTELDSTEKELRIGQSTIYHSFQPSSLSMNSSGRVYHKCPIGGKALVADKLTDKLYRRFRFDDDGVPVGFQCGEQIIELKK.

It belongs to the UPF0598 family.

The protein is UPF0598 protein F59C6.12 of Caenorhabditis elegans.